Consider the following 93-residue polypeptide: uncharacterized protein (93 aa).

Positions Met1–Ser22 are cleaved as a signal peptide.

This is an uncharacterized protein from Escherichia coli (strain K12).